We begin with the raw amino-acid sequence, 148 residues long: Globin, monomeric component M-IV (148 aa).

In terms of domain architecture, Globin spans 2 to 147 (GLSAAQRQVV…ISGALISGLQ (146 aa)). Position 91 (His-91) interacts with heme b.

In terms of assembly, monomer.

This Glycera dibranchiata (Bloodworm) protein is Globin, monomeric component M-IV.